The following is a 249-amino-acid chain: Probable GDP-mannose transporter 2 (249 aa).

At 1-15 (MIYTSSKSLQYLAVP) the chain is on the lumenal side. Residues 16 to 36 (IYTIFKNLTIILIAYGEVLFF) form a helical membrane-spanning segment. Over 37-47 (GGKVTSMELTS) the chain is Cytoplasmic. The helical transmembrane segment at 48–68 (FIMMVLSSVVATWGDQQAIAI) threads the bilayer. Residues 69–84 (KASSLEDLDQELVEST) are Lumenal-facing. Residues 85 to 105 (IFVLNPGYLWMFTNCISSALF) traverse the membrane as a helical segment. Topologically, residues 106–122 (VLIMRKRIRLTNFKDYD) are cytoplasmic. The helical transmembrane segment at 123–143 (TMFYNNVLALPLLLVFSFIME) threads the bilayer. The Lumenal segment spans residues 144 to 159 (DWSTKNLSVNLSADSL). 2 N-linked (GlcNAc...) asparagine glycosylation sites follow: asparagine 149 and asparagine 153. A helical transmembrane segment spans residues 160–180 (AAMVISGLMSVGISYCSGWCV). The Cytoplasmic portion of the chain corresponds to 181 to 186 (RVTSST). The chain crosses the membrane as a helical span at residues 187–207 (TYSMVGALNKLPIALAGLVFF). Over 208-211 (DAPK) the chain is Lumenal. A helical transmembrane segment spans residues 212–232 (NFLSFFSIFLGFLSGLLYAVA). The Cytoplasmic portion of the chain corresponds to 233-249 (KQKKIQQQKVLAATLEK).

It belongs to the TPT transporter family. SLC35D subfamily.

It localises to the golgi apparatus membrane. The protein resides in the cytoplasmic vesicle membrane. It is found in the endoplasmic reticulum membrane. Its function is as follows. Involved in the import of GDP-mannose from the cytoplasm into the Golgi lumen. This Saccharomyces cerevisiae (strain RM11-1a) (Baker's yeast) protein is Probable GDP-mannose transporter 2 (HVG1).